Here is a 1162-residue protein sequence, read N- to C-terminus: Spike glycoprotein (1162 aa).

Residues 1–18 form the signal peptide; it reads MLVTPLLLVTLLCALCSA. Over 19–1095 the chain is Extracellular; the sequence is ALYDSSSYVY…LKTYIKWPWY (1077 aa). N-linked (GlcNAc...) asparagine; by host glycosylation is found at N51, N77, N103, N144, N163, N178, N212, N237, N247, N264, N271, N276, N306, N425, N447, N513, N530, N579, N591, N669, N676, and N714. The heptad repeat 1 (HR1) stretch occupies residues 769 to 874; sequence IPFATQLQAR…QVDRLITGRL (106 aa). The stretch at 822 to 866 forms a coiled coil; that stretch reads QDVVNKQSAILTETMASLNKNFGAISSVIQEIYLQLDAIQANAQV. N-linked (GlcNAc...) asparagine; by host glycans are attached at residues N947, N960, N979, N1014, N1051, N1058, and N1074. The segment at 1024–1105 is heptad repeat 2 (HR2); the sequence is NDDFDFDDEL…VWLAIAFATI (82 aa). Residues 1055–1083 are a coiled coil; sequence PVLNITYDIDKIEEVIKGLNDSLIDLETL. A helical transmembrane segment spans residues 1096 to 1116; the sequence is VWLAIAFATIIFILILGWVFF. Residues 1117 to 1162 lie on the Cytoplasmic side of the membrane; the sequence is MTGCCGCCCGCFGIIPLMSKCGKKSSYYTTFDNDVVTEQYRPKKSV. A Di-lysine motif motif is present at residues 1159 to 1162; sequence KKSV.

This sequence belongs to the gammacoronaviruses spike protein family. In terms of assembly, homotrimer; each monomer consists of a S1 and a S2 subunit. The resulting peplomers protrude from the virus surface as spikes. In terms of processing, specific enzymatic cleavages in vivo yield mature proteins. The precursor is processed into S1 and S2 by host cell furin or furin-like protease to yield the mature S1 and S2 proteins. The cleavage site between S1 and S2 requires the optimal sequence [KR]-X-[KR]-R. Additionally, a second cleavage leads to the release of a fusion peptide after viral attachment to host cell receptor.

It is found in the virion membrane. The protein resides in the host endoplasmic reticulum-Golgi intermediate compartment membrane. Attaches the virion to the host cell membrane by interacting with sialic acids, initiating the infection. Functionally, mediates fusion of the virion and cellular membranes by acting as a class I viral fusion protein. Under the current model, the protein has at least 3 conformational states: pre-fusion native state, pre-hairpin intermediate state, and post-fusion hairpin state. During viral and target cell membrane fusion, the coiled coil regions (heptad repeats) assume a trimer-of-hairpins structure, positioning the fusion peptide in close proximity to the C-terminal region of the ectodomain. The formation of this structure appears to drive apposition and subsequent fusion of viral and target cell membranes. In terms of biological role, acts as a viral fusion peptide after S2 cleavage occurring upon virus endocytosis. The sequence is that of Spike glycoprotein from Avian infectious bronchitis virus (strain KB8523) (IBV).